Consider the following 463-residue polypeptide: uncharacterized protein (463 aa).

6 helical membrane passes run 3 to 23, 88 to 108, 112 to 132, 216 to 236, 245 to 265, and 276 to 296; these read IPPEVHSGLLSAGCGPGSLLV, VAAAAAYCSALAAMPTPAELA, AIHGVLIATNFFGINTVPIAL, FSPAVTVVLALVALQLYDFLW, LLLLPFFTPTLSALTALSALI, and LPIAAALGPGDQWGANLAVAV. The tract at residues 303–322 is disordered; that stretch reads VPGGSPPTSNPAPAAPSSNS. A compositionally biased stretch (pro residues) spans 306–316; sequence GSPPTSNPAPA. Transmembrane regions (helical) follow at residues 323-343 and 419-439; these read VGSASAAPGISYAVPGLAPPG and AGTLGFAGTAPTTSGAAAGMV.

The protein belongs to the mycobacterial PPE family.

Its subcellular location is the cell membrane. This is an uncharacterized protein from Mycobacterium tuberculosis (strain CDC 1551 / Oshkosh).